We begin with the raw amino-acid sequence, 214 residues long: Heat shock protein 26 (214 aa).

S2 carries the post-translational modification N-acetylserine. T42 bears the Phosphothreonine mark. One can recognise a sHSP domain in the interval 86-207; the sequence is GFPRSVAVPV…KNHVKKIEVS (122 aa). Position 90 is a phosphoserine (S90). T163 bears the Phosphothreonine mark. The interval 192–214 is disordered; that stretch reads KPQKDGKNHVKKIEVSSQESWGN. Basic and acidic residues predominate over residues 193 to 205; sequence PQKDGKNHVKKIE. Residues S208 and S211 each carry the phosphoserine modification.

Belongs to the small heat shock protein (HSP20) family. In terms of assembly, present in large complexes.

In terms of biological role, not known. One of the major polypeptides produced on heat shock. The protein is Heat shock protein 26 (HSP26) of Saccharomyces cerevisiae (strain ATCC 204508 / S288c) (Baker's yeast).